A 393-amino-acid polypeptide reads, in one-letter code: S-adenosylmethionine synthase (393 aa).

H16 is an ATP binding site. Position 18 (D18) interacts with Mg(2+). K(+) is bound at residue E44. E57 and Q100 together coordinate L-methionine. The tract at residues 100 to 110 (QSNDIAQGVDH) is flexible loop. Residues 167-169 (DAK), 238-239 (RF), D247, 253-254 (RK), A270, and K274 contribute to the ATP site. L-methionine is bound at residue D247. K278 provides a ligand contact to L-methionine.

Belongs to the AdoMet synthase family. Homotetramer; dimer of dimers. It depends on Mg(2+) as a cofactor. The cofactor is K(+).

It is found in the cytoplasm. The enzyme catalyses L-methionine + ATP + H2O = S-adenosyl-L-methionine + phosphate + diphosphate. Its pathway is amino-acid biosynthesis; S-adenosyl-L-methionine biosynthesis; S-adenosyl-L-methionine from L-methionine: step 1/1. Its function is as follows. Catalyzes the formation of S-adenosylmethionine (AdoMet) from methionine and ATP. The overall synthetic reaction is composed of two sequential steps, AdoMet formation and the subsequent tripolyphosphate hydrolysis which occurs prior to release of AdoMet from the enzyme. The sequence is that of S-adenosylmethionine synthase from Acidovorax ebreus (strain TPSY) (Diaphorobacter sp. (strain TPSY)).